A 123-amino-acid polypeptide reads, in one-letter code: Large ribosomal subunit protein bL12 (123 aa).

Belongs to the bacterial ribosomal protein bL12 family. Homodimer. Part of the ribosomal stalk of the 50S ribosomal subunit. Forms a multimeric L10(L12)X complex, where L10 forms an elongated spine to which 2 to 4 L12 dimers bind in a sequential fashion. Binds GTP-bound translation factors.

Forms part of the ribosomal stalk which helps the ribosome interact with GTP-bound translation factors. Is thus essential for accurate translation. This chain is Large ribosomal subunit protein bL12, found in Mycoplasmopsis synoviae (strain 53) (Mycoplasma synoviae).